The following is a 73-amino-acid chain: Gas vesicle protein A (73 aa).

The protein belongs to the gas vesicle GvpA family. The gas vesicle shell is 2 nm thick and consists of a single layer of this protein. It forms helical ribs nearly perpendicular to the long axis of the vesicle.

It is found in the gas vesicle shell. Its function is as follows. Gas vesicles are hollow, gas filled proteinaceous nanostructures found in some microorganisms. During planktonic growth they allow positioning of the organism at a favorable depth for light or nutrient acquisition. GvpA forms the protein shell. This chain is Gas vesicle protein A, found in Nostoc punctiforme (strain ATCC 29133 / PCC 73102).